A 300-amino-acid chain; its full sequence is 4-hydroxy-tetrahydrodipicolinate synthase (300 aa).

Residue T45 coordinates pyruvate. Y140 acts as the Proton donor/acceptor in catalysis. K169 functions as the Schiff-base intermediate with substrate in the catalytic mechanism. Residue I210 coordinates pyruvate.

The protein belongs to the DapA family. As to quaternary structure, homotetramer; dimer of dimers.

The protein resides in the cytoplasm. It catalyses the reaction L-aspartate 4-semialdehyde + pyruvate = (2S,4S)-4-hydroxy-2,3,4,5-tetrahydrodipicolinate + H2O + H(+). Its pathway is amino-acid biosynthesis; L-lysine biosynthesis via DAP pathway; (S)-tetrahydrodipicolinate from L-aspartate: step 3/4. Its function is as follows. Catalyzes the condensation of (S)-aspartate-beta-semialdehyde [(S)-ASA] and pyruvate to 4-hydroxy-tetrahydrodipicolinate (HTPA). The protein is 4-hydroxy-tetrahydrodipicolinate synthase of Helicobacter pylori (strain Shi470).